Consider the following 485-residue polypeptide: P2X purinoceptor 2 (485 aa).

Topologically, residues 1–43 (MAAAQPRLPAGAAMVRRLARGCWSAFWDYETPKVIVVRNRRLG) are cytoplasmic. 6 disulfide bridges follow: Cys22–Cys443, Cys126–Cys177, Cys137–Cys160, Cys143–Cys171, Cys227–Cys237, and Cys271–Cys280. Residues 44–64 (FVHRMVQLLILLYFVWYVFIV) form a helical membrane-spanning segment. Topologically, residues 65 to 339 (QKSYQDSETG…IVHGQAGKFS (275 aa)) are extracellular. 2 residues coordinate ATP: Lys82 and Lys84. The N-linked (GlcNAc...) asparagine glycan is linked to Asn195. Position 197 (Thr197) interacts with ATP. N-linked (GlcNAc...) asparagine glycosylation is present at Asn252. The ATP site is built by Ser297, Asn301, and Arg303. N-linked (GlcNAc...) asparagine glycosylation is present at Asn311. An ATP-binding site is contributed by Lys321. The segment at 322–335 (AYGIRIDVIVHGQA) is pore-forming motif. A helical membrane pass occupies residues 340 to 360 (LIPTIINLATALTSIGVGSFL). Residues 361–485 (CDWILLTFMN…STDPKGLAQL (125 aa)) lie on the Cytoplasmic side of the membrane. Positions 406–485 (PPPSHYSQDQ…STDPKGLAQL (80 aa)) are disordered. Low complexity predominate over residues 420 to 436 (PSGEGPALGEGAELPLA). Positions 469–478 (PSQQDSTSTD) are enriched in polar residues.

Belongs to the P2X receptor family. As to quaternary structure, homotrimer and heterotrimer; functional P2XRs are organized as homomeric and heteromeric trimers. Homotrimer. Forms heterotrimer with P2XR1. Forms heterotrimer with P2XR3. Forms heterotrimer with P2XR6.

The protein localises to the cell membrane. The catalysed reaction is Ca(2+)(in) = Ca(2+)(out). It carries out the reaction K(+)(in) = K(+)(out). It catalyses the reaction Na(+)(in) = Na(+)(out). Fast activation by external ATP. Exhibits slow desensitization during prolonged ATP activation. Not sensitive to the ATP agonist:alpha/beta-methylene-ATP. In terms of biological role, ATP-gated nonselective transmembrane cation channel permeable to potassium, sodium and calcium. Activation by extracellular ATP induces a variety of cellular responses, such as excitatory postsynaptic responses in sensory neurons, neuromuscular junctions (NMJ) formation, hearing, perception of taste and peristalsis. In the inner ear, regulates sound transduction and auditory neurotransmission, outer hair cell electromotility, inner ear gap junctions, and K(+) recycling. Mediates synaptic transmission between neurons and from neurons to smooth muscle. The chain is P2X purinoceptor 2 (P2rx2) from Mus musculus (Mouse).